The chain runs to 383 residues: Guanine nucleotide-binding protein alpha-1 subunit (383 aa).

The tract at residues 1-20 (MGLLCSRSRHHTEDTDENTQ) is disordered. Gly-2 carries the N-myristoyl glycine lipid modification. Cys-5 is lipidated: S-palmitoyl cysteine. In terms of domain architecture, G-alpha spans 37–383 (HIRKLLLLGA…RRNLLEAGLL (347 aa)). The tract at residues 40–53 (KLLLLGAGESGKST) is G1 motif. Residues Glu-48, Ser-49, Gly-50, Lys-51, Ser-52, Thr-53, Asp-162, Leu-187, Tyr-188, Thr-193, Gly-221, Asn-287, Lys-288, Asp-290, and Ala-355 each contribute to the GTP site. Ser-52 provides a ligand contact to Mg(2+). Residues 185 to 193 (DVLYARVRT) are G2 motif. Position 193 (Thr-193) interacts with Mg(2+). Residues 214 to 223 (YRLFDVGGQR) form a G3 motif region. The G4 motif stretch occupies residues 283–290 (MLFLNKFD). A G5 motif region spans residues 353-358 (TTALDQ).

The protein belongs to the G-alpha family. In terms of assembly, g proteins are composed of 3 units; alpha, beta and gamma. The alpha chain contains the guanine nucleotide binding site. Interacts with RGS1, THF1, the pirin protein PRN1, GTG1 and GTG2. Binds to GCR1. May interact with ADT3. No interactions with RACK1A, RACK1B or RACK1C. Interacts with PLDALPHA1. Interacts with CAND2/PMTR1. Requires Mg(2+) as cofactor. In terms of tissue distribution, more abundant in roots and/or leaves.

It is found in the cell membrane. Its function is as follows. Exhibits a fast rate of basal nucleotide exchange. Guanine nucleotide-binding proteins (G proteins) are involved as modulators or transducers in various transmembrane signaling systems. Together with GCR1, may regulate the cell cycle via a signaling cascade that uses phosphatidylinositol-specific phospholipase C (PI-PLC) as an effector and inositol 1,4,5-trisphosphate (IP(3)) as a second messenger. Promotes abscisic acid (ABA) responses in guard cells. Involved in the blue light (BL) signaling. Together with GCR1 and ADT3, required for BL-mediated synthesis of phenylpyruvate and subsequently of phenylalanine (Phe), in etiolated seedlings. Modulates root architecture (e.g. lateral root formation). Negatively regulated by RGS1. In collaboration with CAND2/PMTR1, regulates the melatonin-mediated stomatal closure involving H(2)O(2) and Ca(2+) signals. In Arabidopsis thaliana (Mouse-ear cress), this protein is Guanine nucleotide-binding protein alpha-1 subunit.